The primary structure comprises 228 residues: Probable ribosomal RNA small subunit methyltransferase A (228 aa).

The S-adenosyl-L-methionine site is built by histidine 9, leucine 11, glycine 34, glutamate 55, aspartate 78, and asparagine 93.

Belongs to the class I-like SAM-binding methyltransferase superfamily. rRNA adenine N(6)-methyltransferase family. RsmA subfamily.

The protein resides in the cytoplasm. In terms of biological role, specifically dimethylates two adjacent adenosines in the loop of a conserved hairpin near the 3'-end of 16S rRNA in the 30S particle. May play a critical role in biogenesis of 30S subunits. The protein is Probable ribosomal RNA small subunit methyltransferase A of Pyrobaculum aerophilum (strain ATCC 51768 / DSM 7523 / JCM 9630 / CIP 104966 / NBRC 100827 / IM2).